The primary structure comprises 693 residues: Heat shock protein homolog SSE1 (693 aa).

A disordered region spans residues 665–693 (LAEKLAAQRKAESEKKESKADAEGDVELD). Residues 673–686 (RKAESEKKESKADA) are compositionally biased toward basic and acidic residues.

It belongs to the heat shock protein 70 family.

Its subcellular location is the cytoplasm. The polypeptide is Heat shock protein homolog SSE1 (SSE1) (Lachancea kluyveri (strain ATCC 58438 / CBS 3082 / BCRC 21498 / NBRC 1685 / JCM 7257 / NCYC 543 / NRRL Y-12651) (Yeast)).